A 224-amino-acid chain; its full sequence is UPF0758 protein IL0240 (224 aa).

Positions 102–224 (GFTEPTMVKD…PISFAERGLL (123 aa)) constitute an MPN domain. Zn(2+) contacts are provided by histidine 173, histidine 175, and aspartate 186. Residues 173–186 (HNHPSGVAEPSQAD) carry the JAMM motif motif.

This sequence belongs to the UPF0758 family.

This is UPF0758 protein IL0240 from Idiomarina loihiensis (strain ATCC BAA-735 / DSM 15497 / L2-TR).